Consider the following 651-residue polypeptide: DNA topoisomerase 3 (651 aa).

The region spanning 1–134 is the Toprim domain; that stretch reads MRLFIAEKPS…KRDKILRCLI (134 aa). 3 residues coordinate Mg(2+): E7, D103, and D105. The 458-residue stretch at 155–612 folds into the Topo IA-type catalytic domain; that stretch reads FIPLATSALA…NLNQILPDLV (458 aa). Residues 194-199 are interaction with DNA; sequence SVGRVQ. The active-site O-(5'-phospho-DNA)-tyrosine intermediate is Y337. The segment at 631 to 651 is disordered; it reads SDRAKPKSAVKKSSKSNGETD.

It belongs to the type IA topoisomerase family. Mg(2+) serves as cofactor.

The catalysed reaction is ATP-independent breakage of single-stranded DNA, followed by passage and rejoining.. Releases the supercoiling and torsional tension of DNA, which is introduced during the DNA replication and transcription, by transiently cleaving and rejoining one strand of the DNA duplex. Introduces a single-strand break via transesterification at a target site in duplex DNA. The scissile phosphodiester is attacked by the catalytic tyrosine of the enzyme, resulting in the formation of a DNA-(5'-phosphotyrosyl)-enzyme intermediate and the expulsion of a 3'-OH DNA strand. The free DNA strand then undergoes passage around the unbroken strand, thus removing DNA supercoils. Finally, in the religation step, the DNA 3'-OH attacks the covalent intermediate to expel the active-site tyrosine and restore the DNA phosphodiester backbone. The sequence is that of DNA topoisomerase 3 from Haemophilus influenzae (strain ATCC 51907 / DSM 11121 / KW20 / Rd).